Consider the following 1067-residue polypeptide: Ubiquitin conjugation factor E4 A (1067 aa).

The disordered stretch occupies residues 33–57; that stretch reads KEQLKQQSDELPASPDDSDNSVSES. Position 386 is an N6-acetyllysine (K386). In terms of domain architecture, U-box spans 987 to 1061; it reads DACDEFLDPI…QRWLAERKQQ (75 aa).

Belongs to the ubiquitin conjugation factor E4 family.

The protein resides in the cytoplasm. It catalyses the reaction S-ubiquitinyl-[E2 ubiquitin-conjugating enzyme]-L-cysteine + [acceptor protein]-L-lysine = [E2 ubiquitin-conjugating enzyme]-L-cysteine + N(6)-ubiquitinyl-[acceptor protein]-L-lysine.. It participates in protein modification; protein ubiquitination. Functionally, ubiquitin-protein ligase that probably functions as an E3 ligase in conjunction with specific E1 and E2 ligases. May also function as an E4 ligase mediating the assembly of polyubiquitin chains on substrates ubiquitinated by another E3 ubiquitin ligase. Mediates 'Lys-48'-linked polyubiquitination of substrates. This is Ubiquitin conjugation factor E4 A from Bos taurus (Bovine).